The chain runs to 253 residues: Ribonuclease HII (253 aa).

One can recognise an RNase H type-2 domain in the interval 30 to 221 (GPVAGVDEVG…VRRLVVDGEP (192 aa)). Residues aspartate 36, glutamate 37, and aspartate 130 each contribute to the a divalent metal cation site.

Belongs to the RNase HII family. Mn(2+) is required as a cofactor. The cofactor is Mg(2+).

The protein resides in the cytoplasm. It catalyses the reaction Endonucleolytic cleavage to 5'-phosphomonoester.. In terms of biological role, endonuclease that specifically degrades the RNA of RNA-DNA hybrids. This Mycolicibacterium gilvum (strain PYR-GCK) (Mycobacterium gilvum (strain PYR-GCK)) protein is Ribonuclease HII.